The chain runs to 229 residues: Urease accessory protein UreF (229 aa).

The protein belongs to the UreF family. In terms of assembly, ureD, UreF and UreG form a complex that acts as a GTP-hydrolysis-dependent molecular chaperone, activating the urease apoprotein by helping to assemble the nickel containing metallocenter of UreC. The UreE protein probably delivers the nickel.

The protein resides in the cytoplasm. Required for maturation of urease via the functional incorporation of the urease nickel metallocenter. This Trichormus variabilis (strain ATCC 29413 / PCC 7937) (Anabaena variabilis) protein is Urease accessory protein UreF.